Reading from the N-terminus, the 542-residue chain is Adenosylmethionine-8-amino-7-oxononanoate aminotransferase (542 aa).

Pyridoxal 5'-phosphate is bound at residue 170–171 (GS). Tyr-205 lines the substrate pocket. Position 311 (Asp-311) interacts with pyridoxal 5'-phosphate. Substrate contacts are provided by Lys-340, Gly-375, and Arg-470. Residue Lys-340 is modified to N6-(pyridoxal phosphate)lysine. The interval 509-542 (DGGLWTKRPDGPDNPDKANTPDTPDGARTGETVV) is disordered. Residues 515 to 524 (KRPDGPDNPD) are compositionally biased toward basic and acidic residues.

The protein belongs to the class-III pyridoxal-phosphate-dependent aminotransferase family. BioA subfamily. Homodimer. Requires pyridoxal 5'-phosphate as cofactor.

The protein resides in the cytoplasm. The enzyme catalyses (8S)-8-amino-7-oxononanoate + S-adenosyl-L-methionine = S-adenosyl-4-methylsulfanyl-2-oxobutanoate + (7R,8S)-7,8-diammoniononanoate. Its pathway is cofactor biosynthesis; biotin biosynthesis; 7,8-diaminononanoate from 8-amino-7-oxononanoate (SAM route): step 1/1. Functionally, catalyzes the transfer of the alpha-amino group from S-adenosyl-L-methionine (SAM) to 7-keto-8-aminopelargonic acid (KAPA) to form 7,8-diaminopelargonic acid (DAPA). It is the only aminotransferase known to utilize SAM as an amino donor. The protein is Adenosylmethionine-8-amino-7-oxononanoate aminotransferase of Nitratidesulfovibrio vulgaris (strain ATCC 29579 / DSM 644 / CCUG 34227 / NCIMB 8303 / VKM B-1760 / Hildenborough) (Desulfovibrio vulgaris).